Reading from the N-terminus, the 301-residue chain is Acetylglutamate kinase (301 aa).

Substrate-binding positions include 64–65, arginine 86, and asparagine 181; that span reads GG.

This sequence belongs to the acetylglutamate kinase family. ArgB subfamily.

It localises to the cytoplasm. It carries out the reaction N-acetyl-L-glutamate + ATP = N-acetyl-L-glutamyl 5-phosphate + ADP. It functions in the pathway amino-acid biosynthesis; L-arginine biosynthesis; N(2)-acetyl-L-ornithine from L-glutamate: step 2/4. Functionally, catalyzes the ATP-dependent phosphorylation of N-acetyl-L-glutamate. The sequence is that of Acetylglutamate kinase from Aliarcobacter butzleri (strain RM4018) (Arcobacter butzleri).